The primary structure comprises 76 residues: Serine proteinase inhibitor IA-2 (76 aa).

An N-acetylserine modification is found at serine 1.

Belongs to the protease inhibitor I9 family.

Its function is as follows. Specifically inhibits an intracellular serine proteinase (proteinase A). This is Serine proteinase inhibitor IA-2 from Pleurotus ostreatus (Oyster mushroom).